We begin with the raw amino-acid sequence, 200 residues long: Nucleoside triphosphate pyrophosphatase (200 aa).

Catalysis depends on D79, which acts as the Proton acceptor.

The protein belongs to the Maf family. It depends on a divalent metal cation as a cofactor.

It localises to the cytoplasm. The catalysed reaction is a ribonucleoside 5'-triphosphate + H2O = a ribonucleoside 5'-phosphate + diphosphate + H(+). It catalyses the reaction a 2'-deoxyribonucleoside 5'-triphosphate + H2O = a 2'-deoxyribonucleoside 5'-phosphate + diphosphate + H(+). Its function is as follows. Nucleoside triphosphate pyrophosphatase. May have a dual role in cell division arrest and in preventing the incorporation of modified nucleotides into cellular nucleic acids. The sequence is that of Nucleoside triphosphate pyrophosphatase from Legionella pneumophila (strain Lens).